A 60-amino-acid polypeptide reads, in one-letter code: Large ribosomal subunit protein bL33 (60 aa).

Belongs to the bacterial ribosomal protein bL33 family.

This Chlorobium chlorochromatii (strain CaD3) protein is Large ribosomal subunit protein bL33.